The chain runs to 286 residues: tRNA (guanine-N(7)-)-methyltransferase (286 aa).

The segment at 1-22 (MGRARPKSQKRGDYRVSRSQEN) is disordered. Residues G104, 127–128 (EI), 162–163 (NS), and C182 each bind S-adenosyl-L-methionine. D185 is a catalytic residue. Residue 260 to 262 (TEE) coordinates S-adenosyl-L-methionine.

Belongs to the class I-like SAM-binding methyltransferase superfamily. TrmB family. As to quaternary structure, forms a complex with TRM82.

The protein resides in the nucleus. It carries out the reaction guanosine(46) in tRNA + S-adenosyl-L-methionine = N(7)-methylguanosine(46) in tRNA + S-adenosyl-L-homocysteine. The protein operates within tRNA modification; N(7)-methylguanine-tRNA biosynthesis. Functionally, catalyzes the formation of N(7)-methylguanine at position 46 (m7G46) in tRNA. The chain is tRNA (guanine-N(7)-)-methyltransferase from Colletotrichum orbiculare (strain 104-T / ATCC 96160 / CBS 514.97 / LARS 414 / MAFF 240422) (Cucumber anthracnose fungus).